We begin with the raw amino-acid sequence, 599 residues long: MANFDIDDFLRNLTPCPGVYRMLDAKGKVLYVGKAKNLKRRIKSYFRNSKLAPKIHVLVKQICDIKITVTHTENEALILESNLIKALQPRYNVLLRDDKSYPYIFLSADDFPRLGFHRGVKQVSGQYFGPYPNIRSVWQTLKLLQRVFPVRQCEDNFYRNRSRPCLQYQIKRCTAPCVGLISKKDYSQDIQHVVMFLKGRDQQVINELVIRMEEASGQLAFEQAAYYRDRIASLRQIQARQYISGEKKDIDVLGVALTEKMACVEVFFIRGGHNLGNKTFLPKLEGNLTPEELLSTFIAQYYLNRETPPILILSHQPKDMGLLTEVLSKQAGRKIALIKPVRGPKVQWIKMALANAKINLNQHLAEKSNITARFKSLQQLLSLANFPQRIECFDVSHIQGTATVASCVVFDREGPRKADYRRFNITGIIPGDDYGALRQALMRRFKKKEGVFPDLLVIDGGKGQINQSLRVLKEIGITEITVLGIAKGPERKAGNETLFLAGYENPVMVTSDSPALHILQHIRDEAHRFAIVSHRKRRAKGGKLSLLEGISGLGPKRRRKLLIQLGGLQEITRAGVEDLAQIEGISLELAQRIYDVFHR.

In terms of domain architecture, GIY-YIG spans 15–93 (PCPGVYRMLD…IKALQPRYNV (79 aa)). A UVR domain is found at 202 to 237 (QQVINELVIRMEEASGQLAFEQAAYYRDRIASLRQI).

This sequence belongs to the UvrC family. As to quaternary structure, interacts with UvrB in an incision complex.

It is found in the cytoplasm. The UvrABC repair system catalyzes the recognition and processing of DNA lesions. UvrC both incises the 5' and 3' sides of the lesion. The N-terminal half is responsible for the 3' incision and the C-terminal half is responsible for the 5' incision. The chain is UvrABC system protein C from Nitrosococcus oceani (strain ATCC 19707 / BCRC 17464 / JCM 30415 / NCIMB 11848 / C-107).